The chain runs to 126 residues: Small ribosomal subunit protein uS12m (126 aa).

Disordered regions lie at residues M1–C27 and G106–I126. 2 stretches are compositionally biased toward basic residues: residues R12–A23 and G109–K120.

This sequence belongs to the universal ribosomal protein uS12 family.

Its subcellular location is the mitochondrion. Its function is as follows. Protein S12 is involved in the translation initiation step. This Marchantia polymorpha (Common liverwort) protein is Small ribosomal subunit protein uS12m (RPS12).